The primary structure comprises 472 residues: WD repeat-containing protein 88 (472 aa).

Residues 1–22 (MASPPRCSPTAHDRECKLPPPS) form a disordered region. 7 WD repeats span residues 100–139 (GHEH…VVRD), 143–182 (RPKA…LLWK), 184–224 (RYDT…TVSV), 228–267 (HHTR…TLLT), 271–310 (AHSN…FRNC), 319–358 (GHEG…RKLS), and 361–400 (GHND…EIPL). A disordered region spans residues 447 to 472 (LPADTSSSSSSSERENSPPPRGSKDD). The span at 458-472 (SERENSPPPRGSKDD) shows a compositional bias: basic and acidic residues.

The polypeptide is WD repeat-containing protein 88 (WDR88) (Homo sapiens (Human)).